The following is a 220-amino-acid chain: MSDGTAGSYSGVERRGLMFVLSSPSGAGKTTLSRMLVEQMPGLQMSVSATTRPMRPGEVDGRDYYFVDRPKFDEMVGAGEFLEWANVFDNRYGTPRAPVEAALAVGRDVLFDIDWQGTQQLRSRAGSDVVSVFILPPSVQALEHRLHTRAQDSHEVIRGRMKKAGDEMSHFDAYDYIVVNDNIGVAFESVRSILRAEQLKRERQVGLDAFVRGMRQQLEG.

One can recognise a Guanylate kinase-like domain in the interval 16 to 195; the sequence is GLMFVLSSPS…AFESVRSILR (180 aa). 23-30 contacts ATP; the sequence is SPSGAGKT.

Belongs to the guanylate kinase family.

It localises to the cytoplasm. The catalysed reaction is GMP + ATP = GDP + ADP. Essential for recycling GMP and indirectly, cGMP. The polypeptide is Guanylate kinase (Rhodopseudomonas palustris (strain ATCC BAA-98 / CGA009)).